A 246-amino-acid polypeptide reads, in one-letter code: MKISDVRSKAFAMPLTSPAFPMGPYRFVDREFLIITYRTDPDRLREIVPEPLQITEPLVHYEFIRMADSTGFGDYTESGQVIPVEYNGQAGGYTLAMYLDDHPPIAGGRELWGFPKKLASPTLHVNTDHILGTLDYGKVRVATGTMGYKHKDLDIEEQAKRLAGPNFLLKIIPHVDGTARVCELVRYYMQDIKMKGAWTGPASLELAPHALAPVADLPVLEIVEARHIVADLTLGLGEVVYDYLAQ.

The active-site Schiff-base intermediate with acetoacetate is K116.

Belongs to the ADC family.

The catalysed reaction is acetoacetate + H(+) = acetone + CO2. Catalyzes the conversion of acetoacetate to acetone and carbon dioxide. The sequence is that of Acetoacetate decarboxylase from Burkholderia ambifaria (strain MC40-6).